We begin with the raw amino-acid sequence, 233 residues long: Pathogenesis-related thaumatin-like protein 3.2 (233 aa).

Residues 1-22 (MARAMHTVWIALVPTLFVFLQG) form the signal peptide. Disulfide bonds link C36-C232, C77-C87, C92-C98, C145-C221, C151-C204, C159-C169, C173-C182, and C183-C191. N-linked (GlcNAc...) asparagine glycosylation is present at N195.

Belongs to the thaumatin family. In terms of tissue distribution, strongly expressed in roots and in female and male strobili, and, to a lower extent, in cotyledons, leaves, stems and pollen grains.

May be involved in disease resistance. The sequence is that of Pathogenesis-related thaumatin-like protein 3.2 from Cryptomeria japonica (Japanese cedar).